Consider the following 80-residue polypeptide: Large ribosomal subunit protein bL31B (80 aa).

This sequence belongs to the bacterial ribosomal protein bL31 family. Type B subfamily. Part of the 50S ribosomal subunit.

The polypeptide is Large ribosomal subunit protein bL31B (Streptococcus pneumoniae serotype 2 (strain D39 / NCTC 7466)).